The sequence spans 256 residues: Type III pantothenate kinase (256 aa).

6–13 provides a ligand contact to ATP; the sequence is DIGNTHIV. Residue 109 to 112 participates in substrate binding; sequence GADR. Asp-111 acts as the Proton acceptor in catalysis. Position 132 (Asp-132) interacts with K(+). Residue Thr-135 participates in ATP binding. Thr-186 serves as a coordination point for substrate.

The protein belongs to the type III pantothenate kinase family. As to quaternary structure, homodimer. NH4(+) is required as a cofactor. K(+) serves as cofactor.

The protein resides in the cytoplasm. It carries out the reaction (R)-pantothenate + ATP = (R)-4'-phosphopantothenate + ADP + H(+). The protein operates within cofactor biosynthesis; coenzyme A biosynthesis; CoA from (R)-pantothenate: step 1/5. Catalyzes the phosphorylation of pantothenate (Pan), the first step in CoA biosynthesis. This chain is Type III pantothenate kinase, found in Fusobacterium nucleatum subsp. nucleatum (strain ATCC 25586 / DSM 15643 / BCRC 10681 / CIP 101130 / JCM 8532 / KCTC 2640 / LMG 13131 / VPI 4355).